Consider the following 131-residue polypeptide: Glycine cleavage system H protein (131 aa).

The region spanning 24–106 (RVTVGISDHA…YGEGWIFVVE (83 aa)) is the Lipoyl-binding domain. K65 is modified (N6-lipoyllysine).

The protein belongs to the GcvH family. As to quaternary structure, the glycine cleavage system is composed of four proteins: P, T, L and H. (R)-lipoate is required as a cofactor.

Its function is as follows. The glycine cleavage system catalyzes the degradation of glycine. The H protein shuttles the methylamine group of glycine from the P protein to the T protein. This chain is Glycine cleavage system H protein, found in Xanthomonas oryzae pv. oryzae (strain MAFF 311018).